Reading from the N-terminus, the 198-residue chain is Putative undecaprenyl-diphosphatase YbjG (198 aa).

Over 1 to 27 the chain is Cytoplasmic; sequence MLENLNLSLFSLINATPDSAPWMISLA. A helical transmembrane segment spans residues 28–48; it reads IFIAKDLITVVPLLAVVLWLW. At 49-57 the chain is on the periplasmic side; that stretch reads GLTAQRQLV. A helical transmembrane segment spans residues 58–78; that stretch reads IKIAIALAVSLFVSWTMGHLF. Residues 79–120 lie on the Cytoplasmic side of the membrane; sequence PHDRPFVENIGYNFLHHAADDSFPSDHGTVIFTFALAFLCWH. A helical membrane pass occupies residues 121–143; the sequence is RLWSGSLLMVLAVVIAWSRVYLG. Over 144 to 149 the chain is Periplasmic; it reads VHWPLD. Residues 150-172 form a helical membrane-spanning segment; that stretch reads MLGGLLAGMIGCLSAQIIWQAMG. Topologically, residues 173–198 are cytoplasmic; that stretch reads HKLYQRLQSWYRVCFALPIRKGWVRD.

It belongs to the BcrC/YbjG family.

The protein localises to the cell inner membrane. The catalysed reaction is di-trans,octa-cis-undecaprenyl diphosphate + H2O = di-trans,octa-cis-undecaprenyl phosphate + phosphate + H(+). Overexpression leads to increased undecaprenyl diphosphatase activity and to increased resistance to bacitracin. May have a preferred substrate other than undecaprenyl diphosphate in vivo. The sequence is that of Putative undecaprenyl-diphosphatase YbjG (ybjG) from Escherichia coli (strain K12).